The chain runs to 352 residues: MAQPQRPLQVPDITKSTHSGGNTVLAYASSAMQGYRSTMEDAHATIENLDALTNTSFFGVYDGHGGSAVARYCANHLHNKVLEQEDFSSNLANALRQSFFRMDEMLRNQAASKELTEYGSGNEYWRTAGRSWLRCAPCVLGPVYCGPLAEGCTACVVLIRNTQIVVGNAGDARCVISRNGQAIALSNDHKPNFPEETQRIVAAGGSVSFSRGSHRVNNGIAVSRAIGDLSYKNNKKLRPEQQLLTCSPEIRADQLTDDTEFLVIACDGVWDVLANQAVVDFVRLHLNNGVELSVICESLLQEAITRDPPSTDNMSVILVRFLHPEGNRGARAATSSTSTGTVPSRHSKSISL.

Residues 26–321 (AYASSAMQGY…DNMSVILVRF (296 aa)) form the PPM-type phosphatase domain. Mn(2+) is bound by residues Asp-62, Gly-63, Asp-267, and Asp-312. The tract at residues 328–352 (RGARAATSSTSTGTVPSRHSKSISL) is disordered. Positions 329–341 (GARAATSSTSTGT) are enriched in low complexity.

This sequence belongs to the PP2C family. It depends on Mg(2+) as a cofactor. The cofactor is Mn(2+).

The catalysed reaction is O-phospho-L-seryl-[protein] + H2O = L-seryl-[protein] + phosphate. It catalyses the reaction O-phospho-L-threonyl-[protein] + H2O = L-threonyl-[protein] + phosphate. In Oryza sativa subsp. japonica (Rice), this protein is Probable protein phosphatase 2C 42.